The following is a 334-amino-acid chain: Ornithine carbamoyltransferase (334 aa).

Carbamoyl phosphate contacts are provided by residues 57 to 60 (STRT), Gln-84, Arg-108, and 135 to 138 (HPTQ). L-ornithine is bound by residues Asn-168, Asp-232, and 236–237 (SM). Carbamoyl phosphate contacts are provided by residues 274-275 (CL) and Arg-321.

The protein belongs to the aspartate/ornithine carbamoyltransferase superfamily. OTCase family.

It localises to the cytoplasm. It catalyses the reaction carbamoyl phosphate + L-ornithine = L-citrulline + phosphate + H(+). It functions in the pathway amino-acid degradation; L-arginine degradation via ADI pathway; carbamoyl phosphate from L-arginine: step 2/2. Its function is as follows. Reversibly catalyzes the transfer of the carbamoyl group from carbamoyl phosphate (CP) to the N(epsilon) atom of ornithine (ORN) to produce L-citrulline. In Haemophilus influenzae (strain PittGG), this protein is Ornithine carbamoyltransferase.